The chain runs to 485 residues: D-alanine--D-alanyl carrier protein ligase (485 aa).

Residue 144 to 145 participates in ATP binding; it reads TS. A D-alanine-binding site is contributed by Asp-189. 284 to 289 is a binding site for ATP; it reads NTYGPT. Residue Val-293 coordinates D-alanine. 2 residues coordinate ATP: Asp-365 and Lys-473. Lys-473 serves as a coordination point for D-alanine.

Belongs to the ATP-dependent AMP-binding enzyme family. DltA subfamily.

Its subcellular location is the cytoplasm. It catalyses the reaction holo-[D-alanyl-carrier protein] + D-alanine + ATP = D-alanyl-[D-alanyl-carrier protein] + AMP + diphosphate. The protein operates within cell wall biogenesis; lipoteichoic acid biosynthesis. Catalyzes the first step in the D-alanylation of lipoteichoic acid (LTA), the activation of D-alanine and its transfer onto the D-alanyl carrier protein (Dcp) DltC. In an ATP-dependent two-step reaction, forms a high energy D-alanyl-AMP intermediate, followed by transfer of the D-alanyl residue as a thiol ester to the phosphopantheinyl prosthetic group of the Dcp. D-alanylation of LTA plays an important role in modulating the properties of the cell wall in Gram-positive bacteria, influencing the net charge of the cell wall. The protein is D-alanine--D-alanyl carrier protein ligase of Staphylococcus aureus (strain Mu3 / ATCC 700698).